The primary structure comprises 142 residues: Large ribosomal subunit protein uL11 (142 aa).

Belongs to the universal ribosomal protein uL11 family. As to quaternary structure, part of the ribosomal stalk of the 50S ribosomal subunit. Interacts with L10 and the large rRNA to form the base of the stalk. L10 forms an elongated spine to which L12 dimers bind in a sequential fashion forming a multimeric L10(L12)X complex. Post-translationally, one or more lysine residues are methylated.

Its function is as follows. Forms part of the ribosomal stalk which helps the ribosome interact with GTP-bound translation factors. The protein is Large ribosomal subunit protein uL11 of Mycoplasma capricolum subsp. capricolum (strain California kid / ATCC 27343 / NCTC 10154).